A 738-amino-acid polypeptide reads, in one-letter code: Ethylene receptor (738 aa).

Helical transmembrane passes span 22 to 42 (ISDF…VYFV), 53 to 73 (VLVQ…INLW), and 91 to 111 (VLTA…IPDL). Cu cation-binding residues include cysteine 64 and histidine 68. Residues 157–305 (DRHTILKTTL…VVADQVAVAL (149 aa)) enclose the GAF domain. Residues 348 to 585 (VMNHEMRTPM…TAIFIVKLGI (238 aa)) form the Histidine kinase domain. At histidine 351 the chain carries Phosphohistidine; by autocatalysis. The 118-residue stretch at 613 to 730 (KVLIMDDNGF…KMRSVLSELL (118 aa)) folds into the Response regulatory domain. Aspartate 661 bears the 4-aspartylphosphate mark.

Belongs to the ethylene receptor family. Homodimer; disulfide-linked. It depends on Cu cation as a cofactor. Post-translationally, activation probably requires a transfer of a phosphate group between a His in the transmitter domain and an Asp of the receiver domain.

It is found in the endoplasmic reticulum membrane. The enzyme catalyses ATP + protein L-histidine = ADP + protein N-phospho-L-histidine.. In terms of biological role, may act early in the ethylene signal transduction pathway, possibly as an ethylene receptor, or as a regulator of the pathway. The polypeptide is Ethylene receptor (ETR1) (Nicotiana tabacum (Common tobacco)).